Reading from the N-terminus, the 304-residue chain is Ribonuclease Z (304 aa).

The Zn(2+) site is built by H63, H65, D67, H68, H143, D213, and H271. The active-site Proton acceptor is the D67.

Belongs to the RNase Z family. In terms of assembly, homodimer. The cofactor is Zn(2+).

It carries out the reaction Endonucleolytic cleavage of RNA, removing extra 3' nucleotides from tRNA precursor, generating 3' termini of tRNAs. A 3'-hydroxy group is left at the tRNA terminus and a 5'-phosphoryl group is left at the trailer molecule.. In terms of biological role, zinc phosphodiesterase, which displays some tRNA 3'-processing endonuclease activity. Probably involved in tRNA maturation, by removing a 3'-trailer from precursor tRNA. In Bacteroides fragilis (strain YCH46), this protein is Ribonuclease Z.